Consider the following 369-residue polypeptide: IPRVTPSTLTALAEEKTLQTSFIRDEDERPKVAYNQFSNEIPIISLEGIDDETGKRAEICDKIVKACEDWGVFQVVDHGVDAEVISQMTTFAKEFFALPPEEKLRFDMSGGKKGGFIVSSHLQGEVVQDWREIVTYFSYPTRARDYSRWPDKPEGWIAVTQKYSEKLMELACKLLDVLSEAMGLEKEALTKACVDMDQKVVVNFYPKCPEPDLTLGLKRHTDPGTITLLLQDQVGGLQATKDNGKTWITVQPVEGAFVVNLGDHGHFLSNGRFKNADHQAVVNSNSSRLSIATFQNPAPEAIVYPLKIREGEKSIMDEPITFAEMYRRKMSKDLELARLKKQAKEQQLQAEVAAEKAKLESKPIEEILA.

Positions 193 to 297 (CVDMDQKVVV…RLSIATFQNP (105 aa)) constitute a Fe2OG dioxygenase domain. Fe cation is bound by residues His-220, Asp-222, and His-278. Residue Arg-288 participates in 2-oxoglutarate binding.

The protein belongs to the iron/ascorbate-dependent oxidoreductase family. It depends on Fe(2+) as a cofactor. L-ascorbate is required as a cofactor.

It catalyses the reaction a (2S)-flavan-4-one + 2-oxoglutarate + O2 = a (2R,3R)-dihydroflavonol + succinate + CO2. It participates in secondary metabolite biosynthesis; flavonoid biosynthesis. Its function is as follows. Catalyzes the 3-beta-hydroxylation of 2S-flavanones to 2R,3R-dihydroflavonols which are intermediates in the biosynthesis of flavonols, anthocyanidins, catechins and proanthocyanidins in plants. This chain is Naringenin,2-oxoglutarate 3-dioxygenase (AN3), found in Petunia hybrida (Petunia).